A 95-amino-acid polypeptide reads, in one-letter code: ESAT-6-like protein EsxC (95 aa).

The protein belongs to the WXG100 family. ESAT-6 subfamily.

The protein resides in the secreted. The protein is ESAT-6-like protein EsxC of Mycolicibacterium paratuberculosis (strain ATCC BAA-968 / K-10) (Mycobacterium paratuberculosis).